A 207-amino-acid chain; its full sequence is dITP/XTP pyrophosphatase (207 aa).

Residue Thr11–Lys16 coordinates substrate. Asp72 acts as the Proton acceptor in catalysis. Asp72 provides a ligand contact to Mg(2+). Residues Ser73, Phe154 to Asp157, Lys177, and His182 to Arg183 contribute to the substrate site.

Belongs to the HAM1 NTPase family. As to quaternary structure, homodimer. Mg(2+) serves as cofactor.

It carries out the reaction XTP + H2O = XMP + diphosphate + H(+). The enzyme catalyses dITP + H2O = dIMP + diphosphate + H(+). The catalysed reaction is ITP + H2O = IMP + diphosphate + H(+). In terms of biological role, pyrophosphatase that catalyzes the hydrolysis of nucleoside triphosphates to their monophosphate derivatives, with a high preference for the non-canonical purine nucleotides XTP (xanthosine triphosphate), dITP (deoxyinosine triphosphate) and ITP. Seems to function as a house-cleaning enzyme that removes non-canonical purine nucleotides from the nucleotide pool, thus preventing their incorporation into DNA/RNA and avoiding chromosomal lesions. The chain is dITP/XTP pyrophosphatase from Thermus thermophilus (strain ATCC BAA-163 / DSM 7039 / HB27).